We begin with the raw amino-acid sequence, 463 residues long: Glycine--tRNA ligase (463 aa).

The substrate site is built by Arg98 and Glu174. ATP-binding positions include 206-208, 216-221, 290-291, and 334-337; these read RNE, FRTREF, EL, and GADR. A substrate-binding site is contributed by 221 to 225; the sequence is FEQME. 330–334 is a binding site for substrate; sequence EPSLG.

It belongs to the class-II aminoacyl-tRNA synthetase family. As to quaternary structure, homodimer.

The protein localises to the cytoplasm. The catalysed reaction is tRNA(Gly) + glycine + ATP = glycyl-tRNA(Gly) + AMP + diphosphate. In terms of biological role, catalyzes the attachment of glycine to tRNA(Gly). In Staphylococcus saprophyticus subsp. saprophyticus (strain ATCC 15305 / DSM 20229 / NCIMB 8711 / NCTC 7292 / S-41), this protein is Glycine--tRNA ligase.